The primary structure comprises 743 residues: Beta-galactosidase (743 aa).

The active-site Proton donor is the Glu388. The active-site Nucleophile is Glu453.

It belongs to the glycosyl hydrolase 2 family. As to quaternary structure, homodimer.

It carries out the reaction Hydrolysis of terminal non-reducing beta-D-galactose residues in beta-D-galactosides.. Its function is as follows. Beta-galactosidase. The protein is Beta-galactosidase (lacZ) of Thermoanaerobacter pseudethanolicus (strain ATCC 33223 / 39E) (Clostridium thermohydrosulfuricum).